We begin with the raw amino-acid sequence, 371 residues long: Putative F-box protein At1g58090 (371 aa).

Residues 1-46 form the F-box domain; sequence MVSKKLPLDLEEEILFRVPPRSLVRFRSVCREWNTLFKNKRFINKN.

The protein is Putative F-box protein At1g58090 of Arabidopsis thaliana (Mouse-ear cress).